The primary structure comprises 1912 residues: Methylcytosine dioxygenase TET2 (1912 aa).

The segment covering 1–11 (MEQDRTTHAEG) has biased composition (basic and acidic residues). The segment at 1 to 86 (MEQDRTTHAE…PHEDRGYSRC (86 aa)) is disordered. 2 positions are modified to phosphoserine: Ser15 and Ser23. Residues 53 to 74 (TKWQSSQSCYGISHMKGSQSSH) are compositionally biased toward polar residues. Residues Ser76 and Ser97 each carry the phosphoserine modification. 8 disordered regions span residues 112-166 (LDQK…FPTR), 340-359 (DRNL…QKET), 367-388 (SSKF…QSLL), 429-470 (IDHQ…PEKS), 673-723 (PQTQ…DKQR), 832-862 (EQAQ…AEAA), 907-966 (QEQQ…NGQP), and 1009-1052 (ESEN…EGCN). Polar residues-rich tracts occupy residues 135 to 158 (SRQP…QESS), 340 to 353 (DRNL…SEQY), 367 to 387 (SSKF…SQSL), 434 to 447 (KTSS…SVHT), and 673 to 689 (PQTQ…SNFP). The span at 690-701 (QICQQQQQQQLQ) shows a compositional bias: low complexity. Composition is skewed to polar residues over residues 707 to 719 (QMPQ…QGSN) and 832 to 844 (EQAQ…SSLQ). A compositionally biased stretch (low complexity) spans 907–921 (QEQQQTQQSQPGHNQ). 2 stretches are compositionally biased toward polar residues: residues 944–966 (PQEN…NGQP) and 1036–1046 (SDTPGEQSQNG). The residue at position 1036 (Ser1036) is a Phosphoserine. 4 residues coordinate Zn(2+): Cys1048, Cys1106, His1132, and Cys1134. Position 1174 (Arg1174) interacts with 2-oxoglutarate. 4 residues coordinate Zn(2+): Cys1184, Cys1186, Cys1202, and Cys1211. The interval 1203-1216 (SWSMYYNGCKFARS) is interaction with DNA. Lys1212 is covalently cross-linked (Glycyl lysine isopeptide (Lys-Gly) (interchain with G-Cter in ubiquitin)). Cys1271 serves as a coordination point for Zn(2+). 2-oxoglutarate is bound at residue Cys1287. His1293 is a Zn(2+) binding site. Fe cation contacts are provided by His1295 and Asp1297. Asn1300 is a binding site for substrate. His1329 provides a ligand contact to 2-oxoglutarate. 2 disordered regions span residues 1379 to 1414 (KKKA…SSSH) and 1444 to 1514 (LQRH…HTSD). The segment covering 1387 to 1396 (AKTKKAARKR) has biased composition (basic residues). Residues 1456-1473 (QPQPPQPQPQTTPQPQPQ) show a composition bias toward pro residues. Residues 1480–1512 (GNSQSVGSHCSGSTSVYTRQPTPHSPYPSSAHT) are compositionally biased toward polar residues. His1795 provides a ligand contact to Fe cation. Residue 1810–1812 (RIS) participates in 2-oxoglutarate binding. 1816-1818 (YRH) is a binding site for substrate. Position 1826 (His1826) interacts with Zn(2+). The segment covering 1842 to 1866 (EEECGKNGSDHVSQKNHGKQEKREP) has biased composition (basic and acidic residues). A disordered region spans residues 1842 to 1871 (EEECGKNGSDHVSQKNHGKQEKREPTGPQE).

Belongs to the TET family. In terms of assembly, interacts with HCFC1. Interacts with OGT. Interacts with PROSER1; this interaction mediates TET2 O-GlcNAcylation and stability by promoting the interaction between OGT and TET2. Directly interacts (via C-terminus) with the DCAF1 component of the CRL4(VprBP) E3 ubiquitin-protein ligase complex. It depends on Fe(2+) as a cofactor. Zn(2+) serves as cofactor. Post-translationally, may be glycosylated. It is unclear whether interaction with OGT leads to GlcNAcylation. According to a report, it is GlcNAcylated by OGT. In contrast, another group reports no GlcNAcylation by OGT in human ortholog. In terms of processing, monoubiquitinated at Lys-1212 by the DCX (DDB1-CUL4-X-box) E3 ubiquitin-protein ligase complex called CRL4(VprBP) or CUL4A-RBX1-DDB1-DCAF1/VPRBP complex; this modification promotes binding to DNA. Acetylated. As to expression, expressed in the brain, kidney, heart, lung, muscle and stomach. Expressed in germinal vesicle (GV) stage and MII-stage oocytes and in early embryos. Present in embryonic stem cells (ES cells).

Its subcellular location is the nucleus. The protein resides in the chromosome. The enzyme catalyses a 5-methyl-2'-deoxycytidine in DNA + 2-oxoglutarate + O2 = a 5-hydroxymethyl-2'-deoxycytidine in DNA + succinate + CO2. It carries out the reaction a 5-hydroxymethyl-2'-deoxycytidine in DNA + 2-oxoglutarate + O2 = a 5-formyl-2'-deoxycytidine in DNA + succinate + CO2 + H2O. It catalyses the reaction a 5-formyl-2'-deoxycytidine in DNA + 2-oxoglutarate + O2 = a 5-carboxyl-2'-deoxycytidine in DNA + succinate + CO2 + H(+). Its function is as follows. Dioxygenase that catalyzes the conversion of the modified genomic base 5-methylcytosine (5mC) into 5-hydroxymethylcytosine (5hmC) and plays a key role in active DNA demethylation. Has a preference for 5-hydroxymethylcytosine in CpG motifs. Also mediates subsequent conversion of 5hmC into 5-formylcytosine (5fC), and conversion of 5fC to 5-carboxylcytosine (5caC). Conversion of 5mC into 5hmC, 5fC and 5caC probably constitutes the first step in cytosine demethylation. Methylation at the C5 position of cytosine bases is an epigenetic modification of the mammalian genome which plays an important role in transcriptional regulation. In addition to its role in DNA demethylation, also involved in the recruitment of the O-GlcNAc transferase OGT to CpG-rich transcription start sites of active genes, thereby promoting histone H2B GlcNAcylation by OGT. This Mus musculus (Mouse) protein is Methylcytosine dioxygenase TET2 (Tet2).